A 319-amino-acid polypeptide reads, in one-letter code: HTH-type transcriptional regulator YidZ (319 aa).

The region spanning 8 to 65 (LDLNLLLCLQLLMQERSVTKAAKRMNVTPSAVSKSLAKLRAWFDDPLFVNSPLGLSPT) is the HTH lysR-type domain. Residues 25-44 (VTKAAKRMNVTPSAVSKSLA) constitute a DNA-binding region (H-T-H motif).

The protein belongs to the LysR transcriptional regulatory family.

Involved in anaerobic NO protection. The chain is HTH-type transcriptional regulator YidZ from Escherichia coli O139:H28 (strain E24377A / ETEC).